Consider the following 449-residue polypeptide: Glutamyl-tRNA reductase (449 aa).

Substrate is bound by residues 58–61 (TCNR), S121, 126–128 (ETQ), and Q132. C59 acts as the Nucleophile in catalysis. Residue 203-208 (GLGEMA) participates in NADP(+) binding.

It belongs to the glutamyl-tRNA reductase family. As to quaternary structure, homodimer.

It carries out the reaction (S)-4-amino-5-oxopentanoate + tRNA(Glu) + NADP(+) = L-glutamyl-tRNA(Glu) + NADPH + H(+). It functions in the pathway porphyrin-containing compound metabolism; protoporphyrin-IX biosynthesis; 5-aminolevulinate from L-glutamyl-tRNA(Glu): step 1/2. Functionally, catalyzes the NADPH-dependent reduction of glutamyl-tRNA(Glu) to glutamate 1-semialdehyde (GSA). The chain is Glutamyl-tRNA reductase from Helicobacter pylori (strain G27).